Consider the following 298-residue polypeptide: Ribosomal protein L11 methyltransferase (298 aa).

Threonine 152, glycine 173, aspartate 195, and asparagine 234 together coordinate S-adenosyl-L-methionine.

It belongs to the methyltransferase superfamily. PrmA family.

It localises to the cytoplasm. It catalyses the reaction L-lysyl-[protein] + 3 S-adenosyl-L-methionine = N(6),N(6),N(6)-trimethyl-L-lysyl-[protein] + 3 S-adenosyl-L-homocysteine + 3 H(+). Its function is as follows. Methylates ribosomal protein L11. In Ralstonia nicotianae (strain ATCC BAA-1114 / GMI1000) (Ralstonia solanacearum), this protein is Ribosomal protein L11 methyltransferase.